Consider the following 264-residue polypeptide: MVKPLPRLRLQGFNNLTKALSFNIYDVCYARTEEERQRYIEYIDEEYNADRLTQILTDVAEIIGANILNVARQDYDPQGASVTILISEEPVIDKKLAGKELISDAVVAHMDKSHITVHTYPETHPQEGIATFRADIDVATCGVISPLKALNYLIESLESDIVIMDYRVRGFTRDVKGKKHFIDHKINSIQNFLAKNIKSRYEMFDVNVYQENIFHTKMHLKDFDLDQYLFEEKAKNLSFKERMKIEALLKREIEELFHGRNLSE.

Serine 113 serves as the catalytic Schiff-base intermediate with substrate; via pyruvic acid. The residue at position 113 (serine 113) is a Pyruvic acid (Ser); by autocatalysis. Histidine 118 (proton acceptor; for processing activity) is an active-site residue. Cysteine 141 (proton donor; for catalytic activity) is an active-site residue.

The protein belongs to the prokaryotic AdoMetDC family. Type 2 subfamily. Heterooctamer of four alpha and four beta chains arranged as a tetramer of alpha/beta heterodimers. It depends on pyruvate as a cofactor. In terms of processing, is synthesized initially as an inactive proenzyme. Formation of the active enzyme involves a self-maturation process in which the active site pyruvoyl group is generated from an internal serine residue via an autocatalytic post-translational modification. Two non-identical subunits are generated from the proenzyme in this reaction, and the pyruvate is formed at the N-terminus of the alpha chain, which is derived from the carboxyl end of the proenzyme. The post-translation cleavage follows an unusual pathway, termed non-hydrolytic serinolysis, in which the side chain hydroxyl group of the serine supplies its oxygen atom to form the C-terminus of the beta chain, while the remainder of the serine residue undergoes an oxidative deamination to produce ammonia and the pyruvoyl group blocking the N-terminus of the alpha chain.

The enzyme catalyses S-adenosyl-L-methionine + H(+) = S-adenosyl 3-(methylsulfanyl)propylamine + CO2. Its pathway is amine and polyamine biosynthesis; S-adenosylmethioninamine biosynthesis; S-adenosylmethioninamine from S-adenosyl-L-methionine: step 1/1. In terms of biological role, catalyzes the decarboxylation of S-adenosylmethionine to S-adenosylmethioninamine (dcAdoMet), the propylamine donor required for the synthesis of the polyamines spermine and spermidine from the diamine putrescine. The protein is S-adenosylmethionine decarboxylase proenzyme of Stenotrophomonas maltophilia (strain K279a).